A 593-amino-acid polypeptide reads, in one-letter code: ETS-related transcription factor Elf-2 (593 aa).

The tract at residues 1 to 34 is disordered; it reads MASAVVDSGGSALELPSDGGENQEGGDTGPDCPA. Ser-107 is subject to Phosphoserine. The disordered stretch occupies residues 146 to 199; it reads VEVSTEESEPMDASPIPTSPDSHEPMKKKKVGRKPKTQQSPVSNGSPELGIKKK. The segment covering 171–181 has biased composition (basic residues); sequence MKKKKVGRKPK. Thr-182 carries the post-translational modification Phosphothreonine. Over residues 182–191 the composition is skewed to polar residues; sequence TQQSPVSNGS. Phosphoserine occurs at positions 185 and 191. Positions 208-290 form a DNA-binding region, ETS; sequence TYLWEFLLDL…EGQRLVYQFK (83 aa). The tract at residues 362–383 is disordered; it reads TSPTHDGSSRSPTTTAPVSAAA. Phosphoserine occurs at positions 363 and 372. Low complexity predominate over residues 370-383; it reads SRSPTTTAPVSAAA. Residue Thr-376 is modified to Phosphothreonine. Position 432 is a phosphoserine (Ser-432). Arg-496 bears the Omega-N-methylarginine mark. Thr-523 is modified (phosphothreonine). Residue Lys-538 forms a Glycyl lysine isopeptide (Lys-Gly) (interchain with G-Cter in SUMO2) linkage.

Belongs to the ETS family. In terms of assembly, interacts with LIM domains of LMO2. Interacts via its N-terminal region with RUNX1. As to expression, expressed in all tissues examined. Highest levels in thymocytes and bone marrow.

It is found in the nucleus. Functionally, probably transcriptionally activates the LYN and BLK promoters and acts synergistically with RUNX1 to transactivate the BLK promoter. The polypeptide is ETS-related transcription factor Elf-2 (Mus musculus (Mouse)).